A 479-amino-acid chain; its full sequence is FAD-dependent monooxygenase ausM (479 aa).

Positions 40, 54, and 113 each coordinate FAD. The active site involves Y224. N289 carries an N-linked (GlcNAc...) asparagine glycan. Positions 316 and 329 each coordinate FAD. The chain crosses the membrane as a helical span at residues 449–469 (TLPWLVISLPVLASMLCYLVY).

Belongs to the paxM FAD-dependent monooxygenase family. FAD serves as cofactor.

The protein resides in the membrane. It participates in secondary metabolite biosynthesis; terpenoid biosynthesis. FAD-dependent monooxygenase; part of the gene cluster B that mediates the biosynthesis of austinol and dehydroaustinol, two fungal meroterpenoids. The first step of the pathway is the synthesis of 3,5-dimethylorsellinic acid by the polyketide synthase ausA. 3,5-dimethylorsellinic acid is then prenylated by the polyprenyl transferase ausN. Further epoxidation by the FAD-dependent monooxygenase ausM and cyclization by the probable terpene cyclase ausL lead to the formation of protoaustinoid A. Protoaustinoid A is then oxidized to spiro-lactone preaustinoid A3 by the combined action of the FAD-binding monooxygenases ausB and ausC, and the dioxygenase ausE. Acid-catalyzed keto-rearrangement and ring contraction of the tetraketide portion of preaustinoid A3 by ausJ lead to the formation of preaustinoid A4. The aldo-keto reductase ausK, with the help of ausH, is involved in the next step by transforming preaustinoid A4 into isoaustinone which is in turn hydroxylated by the P450 monooxygenase ausI to form austinolide. Finally, the cytochrome P450 monooxygenase ausG modifies austinolide to austinol. Austinol can be further modified to dehydroaustinol which forms a diffusible complex with diorcinol that initiates conidiation. Due to genetic rearrangements of the clusters and the subsequent loss of some enzymes, the end products of the Emericella nidulans austinoid biosynthesis clusters are austinol and dehydroaustinol, even if additional enzymes, such as the O-acetyltransferase ausQ and the cytochrome P450 monooxygenase ausR are still functional. In Emericella nidulans (strain FGSC A4 / ATCC 38163 / CBS 112.46 / NRRL 194 / M139) (Aspergillus nidulans), this protein is FAD-dependent monooxygenase ausM.